The following is a 452-amino-acid chain: Bifunctional protein GlmU (452 aa).

Residues methionine 1–lysine 226 are pyrophosphorylase. UDP-N-acetyl-alpha-D-glucosamine-binding positions include leucine 9–glycine 12, lysine 23, glutamine 73, glycine 78–threonine 79, tyrosine 100–aspartate 102, glycine 137, glutamate 151, asparagine 166, and asparagine 224. Aspartate 102 contributes to the Mg(2+) binding site. A Mg(2+)-binding site is contributed by asparagine 224. Residues valine 227–glutamine 247 form a linker region. Positions glycine 248 to lysine 452 are N-acetyltransferase. Residues arginine 330 and lysine 348 each coordinate UDP-N-acetyl-alpha-D-glucosamine. The active-site Proton acceptor is histidine 360. Residues tyrosine 363 and asparagine 374 each coordinate UDP-N-acetyl-alpha-D-glucosamine. Acetyl-CoA-binding positions include alanine 377, asparagine 383–tyrosine 384, serine 402, alanine 420, and arginine 437.

This sequence in the N-terminal section; belongs to the N-acetylglucosamine-1-phosphate uridyltransferase family. It in the C-terminal section; belongs to the transferase hexapeptide repeat family. Homotrimer. Requires Mg(2+) as cofactor.

Its subcellular location is the cytoplasm. It carries out the reaction alpha-D-glucosamine 1-phosphate + acetyl-CoA = N-acetyl-alpha-D-glucosamine 1-phosphate + CoA + H(+). The enzyme catalyses N-acetyl-alpha-D-glucosamine 1-phosphate + UTP + H(+) = UDP-N-acetyl-alpha-D-glucosamine + diphosphate. It functions in the pathway nucleotide-sugar biosynthesis; UDP-N-acetyl-alpha-D-glucosamine biosynthesis; N-acetyl-alpha-D-glucosamine 1-phosphate from alpha-D-glucosamine 6-phosphate (route II): step 2/2. Its pathway is nucleotide-sugar biosynthesis; UDP-N-acetyl-alpha-D-glucosamine biosynthesis; UDP-N-acetyl-alpha-D-glucosamine from N-acetyl-alpha-D-glucosamine 1-phosphate: step 1/1. It participates in bacterial outer membrane biogenesis; LPS lipid A biosynthesis. In terms of biological role, catalyzes the last two sequential reactions in the de novo biosynthetic pathway for UDP-N-acetylglucosamine (UDP-GlcNAc). The C-terminal domain catalyzes the transfer of acetyl group from acetyl coenzyme A to glucosamine-1-phosphate (GlcN-1-P) to produce N-acetylglucosamine-1-phosphate (GlcNAc-1-P), which is converted into UDP-GlcNAc by the transfer of uridine 5-monophosphate (from uridine 5-triphosphate), a reaction catalyzed by the N-terminal domain. The protein is Bifunctional protein GlmU of Ruthia magnifica subsp. Calyptogena magnifica.